The chain runs to 767 residues: Cation/H(+) antiporter 27 (767 aa).

11 consecutive transmembrane segments (helical) span residues 39-59 (LPLL…FQFL), 63-83 (FGKF…PSVI), 99-119 (VYII…ITTC), 135-155 (INGI…AILI), 173-193 (HVAI…LSSL), 205-225 (LASM…NIAI), 242-262 (VLQM…MLWM), 280-300 (ICVL…PYFF), 323-343 (IGCF…GLNI), 371-391 (IALP…VGFI), and 415-435 (KSFG…IVIV).

It belongs to the monovalent cation:proton antiporter 2 (CPA2) transporter (TC 2.A.37) family. CHX (TC 2.A.37.4) subfamily. Specifically expressed in pollen.

It is found in the membrane. May operate as a cation/H(+) antiporter. This Arabidopsis thaliana (Mouse-ear cress) protein is Cation/H(+) antiporter 27 (CHX27).